A 462-amino-acid polypeptide reads, in one-letter code: Cysteine--tRNA ligase (462 aa).

Cys29 is a binding site for Zn(2+). The 'HIGH' region signature appears at 31 to 41; the sequence is PTVYNHAHIGN. Zn(2+)-binding residues include Cys211, His236, and Glu240. The 'KMSKS' region signature appears at 269 to 273; it reads KMSKS. Lys272 lines the ATP pocket.

Belongs to the class-I aminoacyl-tRNA synthetase family. In terms of assembly, monomer. Zn(2+) serves as cofactor.

It localises to the cytoplasm. The enzyme catalyses tRNA(Cys) + L-cysteine + ATP = L-cysteinyl-tRNA(Cys) + AMP + diphosphate. The sequence is that of Cysteine--tRNA ligase from Caulobacter sp. (strain K31).